The sequence spans 179 residues: Oryzines biosynthesis cluster protein J (179 aa).

The Cupin type-2 domain occupies 88-148 (YVDYHPGCEP…NHCWRNPSKT (61 aa)).

The protein belongs to the oryJ family.

Its pathway is secondary metabolite biosynthesis. Its function is as follows. Part of the gene cluster that mediates the biosynthesis of oryzines, natural products with an unusual maleidride backbone. The two subunits of the fungal fatty acid synthase oryfasA and oryfasB probably form octenoic acid. This fatty acid is most likely activated by the acyl-CoA ligase oryP to give octenyl-CoA before the citrate synthase-like protein oryE catalyzes condensation with oxaloacetate to form tricarboxylic acid. The next steps of the pathways are conjectural, but a favorite possible route has been proposed, beginning with decarboxylation and concomitant dehydration by the decarboxylase oryM, followed by tautomerization, which may lead to the production of a diene intermediate. Reduction of this diene intermediate could give the known metabolite piliformic acid. On the pathway to oryzine B and oryzine A, however, hydroxylation of the diene by the alpha-ketoglutarate-dependent dioxygenase oryG and lactonisation by the lactonohydrolases oryH or oryL could give oryzine B directly. Finally, enoyl reduction by the dehydrogenase oryD would then convert oryzine B into oryzine A. This chain is Oryzines biosynthesis cluster protein J, found in Aspergillus oryzae (strain ATCC 42149 / RIB 40) (Yellow koji mold).